The chain runs to 344 residues: uncharacterized protein (344 aa).

The segment at 95-344 (TINPEDANED…TPAKKNSKGR (250 aa)) is disordered. A compositionally biased stretch (basic and acidic residues) spans 103–123 (EDAKVKNSLKLEKEEGSDEKS). Positions 135 to 155 (SDDESDNSNDSEESEAEDSDQ) are enriched in acidic residues. Over residues 191-200 (SAKNAKASKP) the composition is skewed to low complexity. The span at 244–259 (SEDEDSGSDNSEEESE) shows a compositional bias: acidic residues. A compositionally biased stretch (basic residues) spans 265–276 (ASSKKPPSKSSK). The span at 281–314 (EDEDEDSGQSESEHSEEESNSDEDSGQSEEESEE) shows a compositional bias: acidic residues. Over residues 331-344 (TAKKTPAKKNSKGR) the composition is skewed to basic residues.

This is an uncharacterized protein from Acanthamoeba polyphaga (Amoeba).